The primary structure comprises 296 residues: Light-independent protochlorophyllide reductase iron-sulfur ATP-binding protein (296 aa).

Residues 39–44 (GIGKST) and lysine 68 each bind ATP. Serine 43 provides a ligand contact to Mg(2+). 2 residues coordinate [4Fe-4S] cluster: cysteine 124 and cysteine 158. 209-210 (NR) is an ATP binding site.

It belongs to the NifH/BchL/ChlL family. In terms of assembly, homodimer. Protochlorophyllide reductase is composed of three subunits; ChlL, ChlN and ChlB. It depends on [4Fe-4S] cluster as a cofactor.

It carries out the reaction chlorophyllide a + oxidized 2[4Fe-4S]-[ferredoxin] + 2 ADP + 2 phosphate = protochlorophyllide a + reduced 2[4Fe-4S]-[ferredoxin] + 2 ATP + 2 H2O. It functions in the pathway porphyrin-containing compound metabolism; chlorophyll biosynthesis (light-independent). In terms of biological role, component of the dark-operative protochlorophyllide reductase (DPOR) that uses Mg-ATP and reduced ferredoxin to reduce ring D of protochlorophyllide (Pchlide) to form chlorophyllide a (Chlide). This reaction is light-independent. The L component serves as a unique electron donor to the NB-component of the complex, and binds Mg-ATP. This is Light-independent protochlorophyllide reductase iron-sulfur ATP-binding protein from Prochlorococcus marinus (strain MIT 9211).